We begin with the raw amino-acid sequence, 390 residues long: RNA polymerase sigma factor SigA (390 aa).

Acidic residues predominate over residues 48–57 (FLEPQTDEDD). The interval 48–75 (FLEPQTDEDDAKSGKAAKSRRRTQSKKK) is disordered. Over residues 62–75 (KAAKSRRRTQSKKK) the composition is skewed to basic residues. A sigma-70 factor domain-2 region spans residues 158–228 (MVQSNLRLVV…TRAIADQSRT (71 aa)). The short motif at 182–185 (DLIQ) is the Interaction with polymerase core subunit RpoC element. Positions 237-312 (ETISRIKKTT…ESDGETPEDQ (76 aa)) are sigma-70 factor domain-3. The interval 325–378 (VLDSLSPRERDVLRLRYGLDDGRMKTLEEIGQIFNVTRERIRQIEAKALRKLRH) is sigma-70 factor domain-4. Positions 351–370 (LEEIGQIFNVTRERIRQIEA) form a DNA-binding region, H-T-H motif.

This sequence belongs to the sigma-70 factor family. RpoD/SigA subfamily. As to quaternary structure, interacts transiently with the RNA polymerase catalytic core.

The protein resides in the cytoplasm. Functionally, sigma factors are initiation factors that promote the attachment of RNA polymerase to specific initiation sites and are then released. This sigma factor is the primary sigma factor during exponential growth. In Nostoc sp. (strain PCC 7120 / SAG 25.82 / UTEX 2576), this protein is RNA polymerase sigma factor SigA.